The chain runs to 320 residues: Acetyl-coenzyme A carboxylase carboxyl transferase subunit alpha (320 aa).

A CoA carboxyltransferase C-terminal domain is found at 41–295 (KIEEKAQQAL…GDAIAAAFAE (255 aa)).

The protein belongs to the AccA family. Acetyl-CoA carboxylase is a heterohexamer composed of biotin carboxyl carrier protein (AccB), biotin carboxylase (AccC) and two subunits each of ACCase subunit alpha (AccA) and ACCase subunit beta (AccD).

The protein resides in the cytoplasm. The enzyme catalyses N(6)-carboxybiotinyl-L-lysyl-[protein] + acetyl-CoA = N(6)-biotinyl-L-lysyl-[protein] + malonyl-CoA. It functions in the pathway lipid metabolism; malonyl-CoA biosynthesis; malonyl-CoA from acetyl-CoA: step 1/1. Component of the acetyl coenzyme A carboxylase (ACC) complex. First, biotin carboxylase catalyzes the carboxylation of biotin on its carrier protein (BCCP) and then the CO(2) group is transferred by the carboxyltransferase to acetyl-CoA to form malonyl-CoA. In Rhodopseudomonas palustris (strain ATCC BAA-98 / CGA009), this protein is Acetyl-coenzyme A carboxylase carboxyl transferase subunit alpha.